The primary structure comprises 40 residues: Subtilisin-like serine protease AS-E1 (40 aa).

The region spanning 4–40 (PWGLARISHRTTGATSYVYDDSAGEGTCSYIIDTGIY) is the Peptidase S8 domain. Aspartate 36 acts as the Charge relay system in catalysis.

Belongs to the peptidase S8 family. As to quaternary structure, homodimer.

Its activity is regulated as follows. Strongly inhibited by antipain and PMSF. Inhibited by benzamidine and aprotinin by 80% and 17% respectively. Little or no inhibition by EDTA, E-64, iodoacetic acid, leupeptin and FUT-175. Its function is as follows. Subtilisin-like serine protease. Cleaves prothrombin at 155-Arg-|-Ser-156, 45-Thr-|-Ala-46 and 316-Tyr-|-Ile-317 to produce meizothrombin(desF1)-like molecules. Degrades fibrinogen. Inhibits plasma coagulation. The polypeptide is Subtilisin-like serine protease AS-E1 (Acremonium sp).